Here is a 382-residue protein sequence, read N- to C-terminus: UDP-N-acetylglucosamine--N-acetylmuramyl-(pentapeptide) pyrophosphoryl-undecaprenol N-acetylglucosamine transferase (382 aa).

UDP-N-acetyl-alpha-D-glucosamine contacts are provided by residues Thr-11 to Gly-13, Asn-117, Arg-160, Ser-209, and Gln-311.

It belongs to the glycosyltransferase 28 family. MurG subfamily.

Its subcellular location is the cell inner membrane. The catalysed reaction is di-trans,octa-cis-undecaprenyl diphospho-N-acetyl-alpha-D-muramoyl-L-alanyl-D-glutamyl-meso-2,6-diaminopimeloyl-D-alanyl-D-alanine + UDP-N-acetyl-alpha-D-glucosamine = di-trans,octa-cis-undecaprenyl diphospho-[N-acetyl-alpha-D-glucosaminyl-(1-&gt;4)]-N-acetyl-alpha-D-muramoyl-L-alanyl-D-glutamyl-meso-2,6-diaminopimeloyl-D-alanyl-D-alanine + UDP + H(+). Its pathway is cell wall biogenesis; peptidoglycan biosynthesis. Cell wall formation. Catalyzes the transfer of a GlcNAc subunit on undecaprenyl-pyrophosphoryl-MurNAc-pentapeptide (lipid intermediate I) to form undecaprenyl-pyrophosphoryl-MurNAc-(pentapeptide)GlcNAc (lipid intermediate II). The protein is UDP-N-acetylglucosamine--N-acetylmuramyl-(pentapeptide) pyrophosphoryl-undecaprenol N-acetylglucosamine transferase of Rickettsia akari (strain Hartford).